The sequence spans 210 residues: Large ribosomal subunit protein bL25 (210 aa).

The segment at 1-23 is disordered; that stretch reads MSDIGTLSAKGRDRAGKGAARAT.

Belongs to the bacterial ribosomal protein bL25 family. CTC subfamily. Part of the 50S ribosomal subunit; part of the 5S rRNA/L5/L18/L25 subcomplex. Contacts the 5S rRNA. Binds to the 5S rRNA independently of L5 and L18.

Functionally, this is one of the proteins that binds to the 5S RNA in the ribosome where it forms part of the central protuberance. This chain is Large ribosomal subunit protein bL25, found in Rhodospirillum rubrum (strain ATCC 11170 / ATH 1.1.1 / DSM 467 / LMG 4362 / NCIMB 8255 / S1).